Consider the following 345-residue polypeptide: Phosphoribosylformylglycinamidine cyclo-ligase (345 aa).

The protein belongs to the AIR synthase family.

Its subcellular location is the cytoplasm. It catalyses the reaction 2-formamido-N(1)-(5-O-phospho-beta-D-ribosyl)acetamidine + ATP = 5-amino-1-(5-phospho-beta-D-ribosyl)imidazole + ADP + phosphate + H(+). The protein operates within purine metabolism; IMP biosynthesis via de novo pathway; 5-amino-1-(5-phospho-D-ribosyl)imidazole from N(2)-formyl-N(1)-(5-phospho-D-ribosyl)glycinamide: step 2/2. In Shewanella sp. (strain MR-7), this protein is Phosphoribosylformylglycinamidine cyclo-ligase.